The chain runs to 135 residues: Small ribosomal subunit protein bS6 (135 aa).

The disordered stretch occupies residues 99-135 (EKSAMLSHLDRNAHAGQDEERSRSPRRQRENAIERVE).

It belongs to the bacterial ribosomal protein bS6 family.

In terms of biological role, binds together with bS18 to 16S ribosomal RNA. This chain is Small ribosomal subunit protein bS6, found in Bartonella tribocorum (strain CIP 105476 / IBS 506).